The chain runs to 536 residues: Glucan 1,6-alpha-glucosidase (536 aa).

D194 serves as the catalytic Nucleophile. The active-site Proton donor is E236.

This sequence belongs to the glycosyl hydrolase 13 family.

The protein resides in the cytoplasm. It catalyses the reaction Hydrolysis of (1-&gt;6)-alpha-D-glucosidic linkages in (1-&gt;6)-alpha-D-glucans and derived oligosaccharides.. Functionally, the physiological substrates may be short isomaltosaccharides. This Streptococcus mutans serotype c (strain ATCC 700610 / UA159) protein is Glucan 1,6-alpha-glucosidase (dexB).